The following is a 104-amino-acid chain: Matrix Gla protein (104 aa).

The first 19 residues, 1–19 (MKSLLPLAILAALAVATLC), serve as a signal peptide directing secretion. Residue Glu21 is modified to 4-carboxyglutamate. Ser22, Ser25, and Ser28 each carry phosphoserine. Residues 51–97 (RAKAQKRVQERNKPAYEINREACDDYKLCERYAMVYGYNAAYNRYFR) enclose the Gla domain. Residues Glu60, Glu67, and Glu71 each carry the 4-carboxyglutamate modification. A disulfide bond links Cys73 and Cys79.

Belongs to the osteocalcin/matrix Gla protein family. Post-translationally, requires vitamin K-dependent gamma-carboxylation for its function.

It is found in the secreted. In terms of biological role, associates with the organic matrix of bone and cartilage. Thought to act as an inhibitor of bone formation. This chain is Matrix Gla protein (Mgp), found in Mus musculus (Mouse).